The primary structure comprises 443 residues: Immediate-early protein ICP-46 homolog (443 aa).

A coiled-coil region spans residues 82–110; sequence EFSEHEQEELKEKMAQLNHCLEDCELDYS.

Belongs to the IIV-6 393L family.

This is Immediate-early protein ICP-46 homolog from Aedes vexans (Inland floodwater mosquito).